The chain runs to 327 residues: Zinc transport protein ZntB (327 aa).

At 1–273 the chain is on the cytoplasmic side; sequence MEGIKGSEVN…SRRTYTMSLM (273 aa). The helical transmembrane segment at 274–294 threads the bilayer; that stretch reads AMVFLPSTFLTGLFGVNLGGI. The Periplasmic segment spans residues 295–300; it reads PGGGYQ. The chain crosses the membrane as a helical span at residues 301-321; it reads FGFSAFCIMLVVLIGGVAWWL. At 322 to 327 the chain is on the cytoplasmic side; that stretch reads HRSKWL.

The protein belongs to the CorA metal ion transporter (MIT) (TC 1.A.35) family.

The protein localises to the cell inner membrane. The catalysed reaction is Zn(2+)(out) + H(+)(out) = Zn(2+)(in) + H(+)(in). Functionally, zinc transporter. Acts as a Zn(2+):proton symporter, which likely mediates zinc ion uptake. This is Zinc transport protein ZntB from Enterobacter sp. (strain 638).